Consider the following 524-residue polypeptide: Ribonuclease Y (524 aa).

The chain crosses the membrane as a helical span at residues 3–23; that stretch reads IVINLFLLVPASIVFFAAGFF. Residues 96–127 form a disordered region; that stretch reads QQREGQLKKQAQDNRDMERRLQDQRKENEQVQ. A compositionally biased stretch (basic and acidic residues) spans 100–124; that stretch reads GQLKKQAQDNRDMERRLQDQRKENE. In terms of domain architecture, KH spans 214–280; sequence ALSVVHIQTD…KLTLQKLLSE (67 aa). In terms of domain architecture, HD spans 340–432; that stretch reads LLQHSREVAM…VDAANVISLS (93 aa).

The protein belongs to the RNase Y family.

It localises to the cell membrane. Endoribonuclease that initiates mRNA decay. In Chlorobium phaeovibrioides (strain DSM 265 / 1930) (Prosthecochloris vibrioformis (strain DSM 265)), this protein is Ribonuclease Y.